Here is a 162-residue protein sequence, read N- to C-terminus: Transcription elongation factor GreA (162 aa).

Positions 45–74 (ENAEYEAAREKQAFIEGRIKELEDMTARAE) form a coiled coil.

It belongs to the GreA/GreB family.

Functionally, necessary for efficient RNA polymerase transcription elongation past template-encoded arresting sites. The arresting sites in DNA have the property of trapping a certain fraction of elongating RNA polymerases that pass through, resulting in locked ternary complexes. Cleavage of the nascent transcript by cleavage factors such as GreA or GreB allows the resumption of elongation from the new 3'terminus. GreA releases sequences of 2 to 3 nucleotides. The sequence is that of Transcription elongation factor GreA from Rickettsia typhi (strain ATCC VR-144 / Wilmington).